Here is a 274-residue protein sequence, read N- to C-terminus: Acyl-[acyl-carrier-protein]--UDP-N-acetylglucosamine O-acyltransferase (274 aa).

It belongs to the transferase hexapeptide repeat family. LpxA subfamily. In terms of assembly, homotrimer.

It localises to the cytoplasm. It catalyses the reaction a (3R)-hydroxyacyl-[ACP] + UDP-N-acetyl-alpha-D-glucosamine = a UDP-3-O-[(3R)-3-hydroxyacyl]-N-acetyl-alpha-D-glucosamine + holo-[ACP]. The protein operates within glycolipid biosynthesis; lipid IV(A) biosynthesis; lipid IV(A) from (3R)-3-hydroxytetradecanoyl-[acyl-carrier-protein] and UDP-N-acetyl-alpha-D-glucosamine: step 1/6. In terms of biological role, involved in the biosynthesis of lipid A, a phosphorylated glycolipid that anchors the lipopolysaccharide to the outer membrane of the cell. The protein is Acyl-[acyl-carrier-protein]--UDP-N-acetylglucosamine O-acyltransferase of Bartonella quintana (strain Toulouse) (Rochalimaea quintana).